The primary structure comprises 356 residues: Peptide chain release factor 1 (356 aa).

Gln234 is modified (N5-methylglutamine).

This sequence belongs to the prokaryotic/mitochondrial release factor family. In terms of processing, methylated by PrmC. Methylation increases the termination efficiency of RF1.

It localises to the cytoplasm. Peptide chain release factor 1 directs the termination of translation in response to the peptide chain termination codons UAG and UAA. The polypeptide is Peptide chain release factor 1 (Parafrankia sp. (strain EAN1pec)).